The following is a 260-amino-acid chain: Shikimate dehydrogenase (NADP(+)) (260 aa).

Residues 14–16 (SAS) and T60 contribute to the shikimate site. Catalysis depends on K64, which acts as the Proton acceptor. 2 residues coordinate shikimate: N85 and D100. Residues 121-125 (GAGGA), 145-150 (NRTYER), and F201 each bind NADP(+). Y203 serves as a coordination point for shikimate. G225 is a binding site for NADP(+).

Belongs to the shikimate dehydrogenase family. Homodimer.

The enzyme catalyses shikimate + NADP(+) = 3-dehydroshikimate + NADPH + H(+). The protein operates within metabolic intermediate biosynthesis; chorismate biosynthesis; chorismate from D-erythrose 4-phosphate and phosphoenolpyruvate: step 4/7. Its function is as follows. Involved in the biosynthesis of the chorismate, which leads to the biosynthesis of aromatic amino acids. Catalyzes the reversible NADPH linked reduction of 3-dehydroshikimate (DHSA) to yield shikimate (SA). This is Shikimate dehydrogenase (NADP(+)) from Pyrobaculum islandicum (strain DSM 4184 / JCM 9189 / GEO3).